Here is a 1658-residue protein sequence, read N- to C-terminus: Silent chromatin protein ESC1 (1658 aa).

The segment covering 36 to 54 (DSKMKDQHGYSRVHNDKYR) has biased composition (basic and acidic residues). Disordered stretches follow at residues 36–76 (DSKM…SSHI) and 156–499 (TSFQ…LENE). 2 stretches are compositionally biased toward acidic residues: residues 205-214 (LENDEYELSE) and 245-254 (SNDEYAEEEG). Polar residues predominate over residues 262 to 286 (GQEQANVENATQISSSDSSEGQNYS). Acidic residues predominate over residues 289-305 (VEMELEDDIDVESDAEK). Basic and acidic residues predominate over residues 335–352 (VIEKYESDEHKVHQRYSE). Residues 365–375 (VDDESEDEESQ) are compositionally biased toward acidic residues. The span at 386 to 397 (VYHHNEHELDDK) shows a compositional bias: basic and acidic residues. Residues 398–407 (ELIEDIESSD) show a composition bias toward acidic residues. Low complexity predominate over residues 408–417 (SESQSAQESE). Basic and acidic residues-rich tracts occupy residues 425-435 (EYKMKNEKSTS), 442-461 (SESRDQGFAKDAYTKNKVEQ), and 471-482 (DDIIRSSLDKNF). Thr500 bears the Phosphothreonine mark. Phosphoserine is present on Ser532. Disordered stretches follow at residues 550-584 (SRNSNCPQKEEQVSESYLGHSNGSNLSGRSLDESE) and 589-608 (LKDFTGENNNNLKTDRGDLS). Residues 568–577 (GHSNGSNLSG) are compositionally biased toward polar residues. A phosphoserine mark is found at Ser579, Ser583, Ser608, and Ser662. 3 disordered regions span residues 770–819 (SKET…EDNT), 863–964 (EMSS…VKGT), and 1082–1115 (ENNTNMHDQVSQACSDSDRDQDSTAEKNVEGSAK). The span at 800-812 (QSKNFPGVANSTD) shows a compositional bias: polar residues. A phosphoserine mark is found at Ser865 and Ser866. Over residues 869-878 (ECVKQNDDGS) the composition is skewed to basic and acidic residues. Residues 879 to 905 (KTQISFSTDSPDNFQESNDNTEFSSTK) show a composition bias toward polar residues. A phosphoserine mark is found at Ser888 and Ser911. Positions 918–931 (SLKKELTKAEVVDK) are enriched in basic and acidic residues. Residues 932 to 956 (LDEEESEDSYEQDYADPEPGNDEGS) show a composition bias toward acidic residues. Phosphoserine is present on residues Ser937, Ser1092, Ser1096, Ser1098, Ser1166, Ser1176, and Ser1178. Polar residues predominate over residues 1082-1096 (ENNTNMHDQVSQACS). Basic and acidic residues predominate over residues 1097–1115 (DSDRDQDSTAEKNVEGSAK). Over residues 1197–1207 (STDASVNMKSV) the composition is skewed to polar residues. Residues 1197–1216 (STDASVNMKSVSSKERDSDE) are disordered. Phosphoserine is present on residues Ser1214 and Ser1254. The span at 1261–1272 (VKDKENLHKSEE) shows a compositional bias: basic and acidic residues. The tract at residues 1261-1315 (VKDKENLHKSEEPLVEGLQSEQHFEKKDHSENEEEFDTIYGDITSANIHSNAPDD) is disordered. Ser1290, Ser1326, and Ser1332 each carry phosphoserine. Disordered stretches follow at residues 1334 to 1482 (RLIE…TSPE) and 1503 to 1658 (PATT…SVDK). The segment covering 1335–1366 (LIEDSRRGKNQEESDEVNTSRERDLTFEKSVN) has biased composition (basic and acidic residues). Phosphoserine occurs at positions 1403, 1409, 1450, and 1454. Residues 1407–1423 (LNSEPEEAELYELEIEG) are compositionally biased toward acidic residues. Over residues 1463 to 1479 (YPYSNSENITAEKSAPT) the composition is skewed to polar residues. Basic and acidic residues predominate over residues 1507-1537 (LEKHDKTNVTSVLDDRSEHLSSHDVDNEPHD). Ser1539 is modified (phosphoserine). 2 stretches are compositionally biased toward basic and acidic residues: residues 1550 to 1564 (PEHQAVDIPVKVEVK) and 1575 to 1591 (VLEEQKPSMELINDKSS). Phosphoserine is present on residues Ser1590 and Ser1591. Basic residues predominate over residues 1607 to 1626 (TKAKKKSRKRNYNSRRRKRK). The span at 1648-1658 (RGQNTHPSVDK) shows a compositional bias: polar residues.

Interacts with SIR4.

Its subcellular location is the nucleus. Its function is as follows. Involved in the clustering of telomeres at the nuclear periphery, forming discrete subcompartments that accumulate a complex of histone-binding silencing factors like SIR4. Required for SIR4-mediated anchoring and partitioning of plasmids. In Saccharomyces cerevisiae (strain ATCC 204508 / S288c) (Baker's yeast), this protein is Silent chromatin protein ESC1 (ESC1).